Here is a 987-residue protein sequence, read N- to C-terminus: Voltage-gated delayed rectifier potassium channel KCNH1 (987 aa).

Residues 1–220 (MTMAGGRKGL…LHYCVFKTTW (220 aa)) lie on the Cytoplasmic side of the membrane. Residues 14-94 (QNTFLENIVR…QTFENYEMNS (81 aa)) enclose the PAS domain. Residues 93-145 (NSFEILMYKKNRTPVWFFVKIAPIRNEQDKVVLFLCTFSDITAFKQPIEDDSC) enclose the PAC domain. Residues 151-162 (FARLTRALTSSR) form a required for phosphatidylinositol bisphosphate binding region. Residues 221 to 241 (DWIILILTFYTAILVPYNVSF) traverse the membrane as a helical segment. Residues 242–248 (KTRQNNV) lie on the Extracellular side of the membrane. A helical transmembrane segment spans residues 249–269 (AWLVVDSIVDVIFLVDIVLNF). Topologically, residues 270-290 (HTTFVGPAGEVISDPKLIRMN) are cytoplasmic. Residues 291–309 (YLKTWFVIDLLSCLPYDVI) form a helical membrane-spanning segment. Residues 310-345 (NAFENVDEVSAFMGDPGKIGFADQIPPPLEGRESQG) are Extracellular-facing. The helical; Voltage-sensor transmembrane segment at 346-368 (ISSLFSSLKVVRLLRLGRVARKL) threads the bilayer. At 369–377 (DHYIEYGAA) the chain is on the cytoplasmic side. Residues 378–399 (VLVLLVCVFGLAAHWMACIWYS) traverse the membrane as a helical segment. The Extracellular portion of the chain corresponds to 400 to 448 (IGDYEIFDEDTKTIRNNSWLYQLAMDIGTPYQFNGSGSGKWEGGPSKNS). Asparagine 415 and asparagine 433 each carry an N-linked (GlcNAc...) asparagine glycan. An intramembrane region (pore-forming) is located at residues 449 to 470 (VYISSLYFTMTSLTSVGFGNIA). Positions 463-468 (SVGFGN) match the Selectivity filter motif. Residues 471-477 (PSTDIEK) are Extracellular-facing. Residues 478 to 498 (IFAVAIMMIGSLLYATIFGNV) form a helical membrane-spanning segment. Residues 499–987 (TTIFQQMYAN…ESERDIFGAS (489 aa)) are Cytoplasmic-facing. Residues 673-770 (KRDALQKVLE…LDDLDVEKGS (98 aa)) form a calmodulin-binding region. Residues 699–701 (YNL) form an interaction with cyclic nucleotide-binding pocket region. The interval 922-962 (AAVLEVKHELKEDIKALSTKMTSIEKQLSEILRILTSRRSS) is CAD (involved in subunit assembly). Residues 960 to 987 (RSSQSPQELFEISRPQSPESERDIFGAS) are disordered. Phosphoserine is present on residues serine 972, serine 976, and serine 979. The segment covering 978-987 (ESERDIFGAS) has biased composition (basic and acidic residues).

Belongs to the potassium channel family. H (Eag) (TC 1.A.1.20) subfamily. Kv10.1/KCNH1 sub-subfamily. Homomultimer. The potassium channel is composed of a homo- or heterotetrameric complex of pore-forming alpha subunits that can associate with modulating beta subunits. Heteromultimer with KCNH5/EAG2. Interacts with ALG10B. Interacts with RABEP1. Interacts (via C-terminus) with CTTN. Interacts (via C-terminal cytoplasmic region) with Ca(2+)-bound calmodulin. Channel activity is regulated via tyrosine phosphorylation/dephosphorylation by SRC and PTPN6. As to expression, detected in cerebellum, cortex and retina.

The protein resides in the cell membrane. It localises to the nucleus inner membrane. The protein localises to the cell projection. Its subcellular location is the dendrite. It is found in the axon. The protein resides in the presynaptic cell membrane. It localises to the perikaryon. The protein localises to the postsynaptic density membrane. Its subcellular location is the early endosome membrane. It carries out the reaction K(+)(in) = K(+)(out). With respect to regulation, channel activity is inhibited by interaction with Ca(2+)-bound calmodulin. Interaction of a single pore-forming alpha subunit with a calmodulin chain is sufficient to promote channel closure. Extracellular magnesium ion concentrations up to 4 mM modulate channel activity by slowing down current activation in a reversible fashion. Channel activity is not regulated by cyclic nucleotides. Channel activity is inhibited by binding intracellular phosphatidylinositol-3,5-bisphosphate and phosphatidylinositol-4,5-bisphosphate (PIP2), but is not inhibited by phosphatidylinositol 4-phosphate. Its function is as follows. Pore-forming (alpha) subunit of a voltage-gated delayed rectifier potassium channel that mediates outward-rectifying potassium currents which, on depolarization, reaches a steady-state level and do not inactivate. The activation kinetics depend on the prepulse potential and external divalent cation concentration. With negative prepulses, the current activation is delayed and slowed down several fold, whereas more positive prepulses speed up activation. The time course of activation is biphasic with a fast and a slowly activating current component. Activates at more positive membrane potentials and exhibit a steeper activation curve. Channel properties are modulated by subunit assembly. Mediates IK(NI) current in myoblasts. Involved in the regulation of cell proliferation and differentiation, in particular adipogenic and osteogenic differentiation in bone marrow-derived mesenchymal stem cells (MSCs). This chain is Voltage-gated delayed rectifier potassium channel KCNH1, found in Bos taurus (Bovine).